The chain runs to 356 residues: Probable G-protein coupled receptor 32 (356 aa).

The Extracellular portion of the chain corresponds to 1–44; it reads MNGVSEGTRGCSDRQPGVLTRDRSCSRKMNSSGCLSEEVGSLRP. Asn30 is a glycosylation site (N-linked (GlcNAc...) asparagine). Residues 45 to 67 form a helical membrane-spanning segment; the sequence is LTVVILSASIVVGVLGNGLVLWM. Residues 68 to 78 lie on the Cytoplasmic side of the membrane; the sequence is TVFRMARTVST. Residues 79–100 form a helical membrane-spanning segment; the sequence is VCFFHLALADFMLSLSLPIAMY. Residues 101 to 116 lie on the Extracellular side of the membrane; the sequence is YIVSRQWLLGEWACKL. Cys114 and Cys191 form a disulfide bridge. A helical membrane pass occupies residues 117–137; the sequence is YITFVFLSYFASNCLLVFISV. Over 138–156 the chain is Cytoplasmic; that stretch reads DRCISVLYPVWALNHRTVQ. The chain crosses the membrane as a helical span at residues 157–178; sequence RASWLAFGVWLLAAALCSAHLK. The Extracellular portion of the chain corresponds to 179 to 220; that stretch reads FRTTRKWNGCTHCYLAFNSDNETAQIWIEGVVEGHIIGTIGH. The N-linked (GlcNAc...) asparagine glycan is linked to Asn199. A helical membrane pass occupies residues 221–241; it reads FLLGFLGPLAIIGTCAHLIRA. The Cytoplasmic portion of the chain corresponds to 242 to 257; that stretch reads KLLREGWVHANRPKRL. The helical transmembrane segment at 258–280 threads the bilayer; the sequence is LLVLVSAFFIFWSPFNVVLLVHL. Residues 281 to 300 are Extracellular-facing; sequence WRRVMLKEIYHPRMLLILQA. Residues 301–320 form a helical membrane-spanning segment; that stretch reads SFALGCVNSSLNPFLYVFVG. Topologically, residues 321-356 are cytoplasmic; it reads RDFQEKFFQSLTSALARAFGEEEFLSSCPRGNAPRE.

It belongs to the G-protein coupled receptor 1 family. In terms of tissue distribution, expressed in resting primary human macrophages.

The protein localises to the cell membrane. In terms of biological role, G-protein coupled receptor that binds to several ligands including resolvin D1 (RvD1) with high affinity, leading to rapid and transient activation of numerous intracellular signaling pathways. In macrophages, enhances the RvD1-stimulated phagocytic and clearance functions. Macrophages migrate less toward different chemoattractant stimuli but phagocytose more microbial particles. Prevents the increase in Ca(2+) and activation of ERK1/2 used by histamine and its H1 receptor subtype to induce goblet cell secretion by activating PKC and GRK2 to counter-regulate the histamine receptor. The sequence is that of Probable G-protein coupled receptor 32 (GPR32) from Homo sapiens (Human).